We begin with the raw amino-acid sequence, 156 residues long: S-ribosylhomocysteine lyase (156 aa).

H54, H58, and C126 together coordinate Fe cation.

Belongs to the LuxS family. As to quaternary structure, homodimer. It depends on Fe cation as a cofactor.

The enzyme catalyses S-(5-deoxy-D-ribos-5-yl)-L-homocysteine = (S)-4,5-dihydroxypentane-2,3-dione + L-homocysteine. Its function is as follows. Involved in the synthesis of autoinducer 2 (AI-2) which is secreted by bacteria and is used to communicate both the cell density and the metabolic potential of the environment. The regulation of gene expression in response to changes in cell density is called quorum sensing. Catalyzes the transformation of S-ribosylhomocysteine (RHC) to homocysteine (HC) and 4,5-dihydroxy-2,3-pentadione (DPD). The sequence is that of S-ribosylhomocysteine lyase from Shouchella clausii (strain KSM-K16) (Alkalihalobacillus clausii).